Here is a 466-residue protein sequence, read N- to C-terminus: Protein hob1 (466 aa).

The BAR domain occupies Leu-17 to Ala-269. 2 coiled-coil regions span residues Ile-31–Gln-67 and Glu-177–Glu-204. The interval Pro-280–Gly-342 is disordered. Residues Ala-294 to Ser-303 are compositionally biased toward low complexity. Phosphoserine is present on residues Ser-298, Ser-299, Ser-301, and Ser-303. Residues Pro-407–Glu-466 form the SH3 domain.

Its function is as follows. Has a role in DNA damage signaling as a part of stress response processes. The polypeptide is Protein hob1 (hob1) (Schizosaccharomyces pombe (strain 972 / ATCC 24843) (Fission yeast)).